The primary structure comprises 417 residues: Serine protease hepsin (417 aa).

The Cytoplasmic portion of the chain corresponds to 1–23 (MAQKEGGRTVPCCSRPKVAALTA). The chain crosses the membrane as a helical; Signal-anchor for type II membrane protein span at residues 24–44 (GTLLLLTAIGAASWAIVAVLL). The Extracellular segment spans residues 45-417 (RSDQEPLYPV…SEASGMVTQL (373 aa)). Positions 54 to 151 (VQVSSADARL…RGRFLAAICQ (98 aa)) constitute an SRCR domain. Intrachain disulfides connect Cys77-Cys140, Cys90-Cys150, Cys119-Cys138, Cys153-Cys277, Cys188-Cys204, Cys291-Cys359, Cys322-Cys338, and Cys349-Cys381. Residue Asn112 is glycosylated (N-linked (GlcNAc...) asparagine). Residues 163-405 (IVGGRDTSLG…FREWIFQAIK (243 aa)) form the Peptidase S1 domain. Catalysis depends on charge relay system residues His203 and Asp257. Catalysis depends on Ser353, which acts as the Charge relay system.

Belongs to the peptidase S1 family. As to expression, detected in liver and kidney.

It is found in the cell membrane. It localises to the apical cell membrane. It catalyses the reaction Cleavage after basic amino-acid residues, with Arg strongly preferred to Lys.. Its function is as follows. Serine protease that cleaves extracellular substrates, and contributes to the proteolytic processing of growth factors, such as HGF and MST1/HGFL. Plays a role in cell growth and maintenance of cell morphology. Plays a role in the proteolytic processing of ACE2. Mediates the proteolytic cleavage of urinary UMOD that is required for UMOD polymerization. The sequence is that of Serine protease hepsin (HPN) from Homo sapiens (Human).